We begin with the raw amino-acid sequence, 240 residues long: 1-(5-phosphoribosyl)-5-[(5-phosphoribosylamino)methylideneamino] imidazole-4-carboxamide isomerase (240 aa).

Aspartate 8 functions as the Proton acceptor in the catalytic mechanism. The Proton donor role is filled by aspartate 129.

The protein belongs to the HisA/HisF family.

The protein resides in the cytoplasm. The enzyme catalyses 1-(5-phospho-beta-D-ribosyl)-5-[(5-phospho-beta-D-ribosylamino)methylideneamino]imidazole-4-carboxamide = 5-[(5-phospho-1-deoxy-D-ribulos-1-ylimino)methylamino]-1-(5-phospho-beta-D-ribosyl)imidazole-4-carboxamide. Its pathway is amino-acid biosynthesis; L-histidine biosynthesis; L-histidine from 5-phospho-alpha-D-ribose 1-diphosphate: step 4/9. The protein is 1-(5-phosphoribosyl)-5-[(5-phosphoribosylamino)methylideneamino] imidazole-4-carboxamide isomerase of Listeria monocytogenes serotype 4a (strain HCC23).